The chain runs to 314 residues: Ribosomal protein uL3 glutamine methyltransferase (314 aa).

Belongs to the protein N5-glutamine methyltransferase family. PrmB subfamily.

It carries out the reaction L-glutaminyl-[ribosomal protein uL3] + S-adenosyl-L-methionine = N(5)-methyl-L-glutaminyl-[ribosomal protein uL3] + S-adenosyl-L-homocysteine + H(+). Its function is as follows. Methylates large ribosomal subunit protein uL3 on a specific glutamine residue. The sequence is that of Ribosomal protein uL3 glutamine methyltransferase from Haemophilus influenzae (strain ATCC 51907 / DSM 11121 / KW20 / Rd).